Here is a 610-residue protein sequence, read N- to C-terminus: Serine/threonine-protein kinase RCK2 (610 aa).

2 disordered regions span residues Met1–Asn55 and Thr99–Glu127. Residues Lys11–Lys24 are compositionally biased toward basic and acidic residues. Polar residues predominate over residues Arg31–Asn55. Residues Ser46 and Ser50 each carry the phosphoserine modification. The 316-residue stretch at Tyr163–Leu478 folds into the Protein kinase domain. Residue Ile169–Val177 participates in ATP binding. At Ser187 the chain carries Phosphoserine. Residue Lys201 participates in ATP binding. Asp313 serves as the catalytic Proton acceptor. Position 350 is a phosphothreonine (Thr350). Positions Lys493–Lys506 are calmodulin-binding. The residue at position 520 (Ser520) is a Phosphoserine. Positions Glu541–Ser564 are disordered.

It belongs to the protein kinase superfamily. CAMK Ser/Thr protein kinase family. CaMK subfamily. Post-translationally, autophosphorylated. Phosphorylated by HOG1 at Ser-520 after osmotic stress.

The protein resides in the cytoplasm. It catalyses the reaction L-seryl-[protein] + ATP = O-phospho-L-seryl-[protein] + ADP + H(+). The enzyme catalyses L-threonyl-[protein] + ATP = O-phospho-L-threonyl-[protein] + ADP + H(+). Activated by Ser-520 phosphorylation by HOG1. Serine/threonine-protein kinase involved in a signal transduction pathway that is activated by changes in the osmolarity of the extracellular environment. The polypeptide is Serine/threonine-protein kinase RCK2 (RCK2) (Saccharomyces cerevisiae (strain ATCC 204508 / S288c) (Baker's yeast)).